Consider the following 351-residue polypeptide: Serine/threonine-protein kinase ZRK1 (351 aa).

The Protein kinase domain occupies F60–L347. ATP-binding positions include V66–W74 and K87. The active-site Proton acceptor is D191.

The protein belongs to the protein kinase superfamily. Ser/Thr protein kinase family. ZRK subfamily. As to quaternary structure, component of a stable high-order oligomeric complex made of RKS1 and RPP13L4/ZAR1 which recruits Xanthomonas campestris effector XopAC/AvrAC-mediated uridylylated PBL2 in the presence of ATP to form a wheel-like pentameric resistosome; this complex triggers immunity toward X.campestris in vascular tissues. Interacts with RPP13L4/ZAR1 and uridylylated PBL2. Expressed at high levels in germinating seeds and at lower levels in adult leaves.

It catalyses the reaction L-seryl-[protein] + ATP = O-phospho-L-seryl-[protein] + ADP + H(+). The enzyme catalyses L-threonyl-[protein] + ATP = O-phospho-L-threonyl-[protein] + ADP + H(+). Functionally, serine/threonine-protein kinase that confers a broad-spectrum quantitative disease resistance (QDR) to the pathogenic biotrophic bacteria Xanthomonas campestris (e.g. pv. campestris (Xcc), pv. raphani, pv. armoriaceae and pv. incanae) by restricting bacterial spread to the vascular system from the infection site; X.campestris causes black rot disease in crops. Seems to not have any kinase activity. The sequence is that of Serine/threonine-protein kinase ZRK1 from Arabidopsis thaliana (Mouse-ear cress).